A 139-amino-acid polypeptide reads, in one-letter code: Large ribosomal subunit protein uL16 (139 aa).

Residues 1–16 (MLIPKRTKYRKQHRPD) are compositionally biased toward basic residues. Positions 1–23 (MLIPKRTKYRKQHRPDRHGMSKG) are disordered.

It belongs to the universal ribosomal protein uL16 family. As to quaternary structure, part of the 50S ribosomal subunit.

Its function is as follows. Binds 23S rRNA and is also seen to make contacts with the A and possibly P site tRNAs. The chain is Large ribosomal subunit protein uL16 from Bifidobacterium animalis subsp. lactis (strain AD011).